Consider the following 261-residue polypeptide: Epidermal growth factor-binding protein type B (261 aa).

An N-terminal signal peptide occupies residues 1–16; sequence MWFLILFLALSLGGID. Positions 17–24 are cleaved as a propeptide — activation peptide; that stretch reads AAPPLQSR. The 234-residue stretch at 25-258 folds into the Peptidase S1 domain; that stretch reads VVGGFNCKKN…FNSWIKDTMM (234 aa). Cystine bridges form between Cys31-Cys173, Cys50-Cys66, Cys152-Cys219, Cys184-Cys198, and Cys209-Cys234. His65 (charge relay system) is an active-site residue. Asn102 carries N-linked (GlcNAc...) asparagine glycosylation. Asp120 acts as the Charge relay system in catalysis. Ser213 serves as the catalytic Charge relay system.

Belongs to the peptidase S1 family. Kallikrein subfamily.

The enzyme catalyses Hydrolyzes mouse Ren2 protein (a species of prorenin present in the submandibular gland) on the carboxy side of the arginine residue at the Lys-Arg-|- pair in the N-terminus, to yield mature renin.. Its function is as follows. Cleaves REN2 at a dibasic site to yield mature renin. The protein is Epidermal growth factor-binding protein type B (Egfbp2) of Mus musculus (Mouse).